The primary structure comprises 146 residues: Keratin-associated protein 12-2 (146 aa).

Repeat copies occupy residues 10–14, 15–19, 20–24, 25–29, 34–38, 40–44, 45–49, 55–59, 60–64, 65–69, 70–74, 75–79, 80–84, 85–89, 90–94, 95–99, 100–104, 105–109, 110–114, 120–124, 125–129, 130–134, and 135–139. The interval 10 to 139 is 23 X 5 AA approximate repeats; it reads CQPACCAPSP…CTSVLCRPIS (130 aa).

This sequence belongs to the KRTAP type 12 family. As to quaternary structure, interacts with hair keratins. As to expression, restricted to a narrow region of the hair fiber cuticle, lying approximately 20 cell layers above the apex of the dermal papilla of the hair root; not detected in any other tissues.

In the hair cortex, hair keratin intermediate filaments are embedded in an interfilamentous matrix, consisting of hair keratin-associated proteins (KRTAP), which are essential for the formation of a rigid and resistant hair shaft through their extensive disulfide bond cross-linking with abundant cysteine residues of hair keratins. The matrix proteins include the high-sulfur and high-glycine-tyrosine keratins. In Homo sapiens (Human), this protein is Keratin-associated protein 12-2 (KRTAP12-2).